The following is a 916-amino-acid chain: Alanine--tRNA ligase (916 aa).

H611, H615, C714, and H718 together coordinate Zn(2+).

The protein belongs to the class-II aminoacyl-tRNA synthetase family. Requires Zn(2+) as cofactor.

It is found in the cytoplasm. The catalysed reaction is tRNA(Ala) + L-alanine + ATP = L-alanyl-tRNA(Ala) + AMP + diphosphate. Functionally, catalyzes the attachment of alanine to tRNA(Ala) in a two-step reaction: alanine is first activated by ATP to form Ala-AMP and then transferred to the acceptor end of tRNA(Ala). Also edits incorrectly charged Ser-tRNA(Ala) and Gly-tRNA(Ala) via its editing domain. The protein is Alanine--tRNA ligase of Methanospirillum hungatei JF-1 (strain ATCC 27890 / DSM 864 / NBRC 100397 / JF-1).